We begin with the raw amino-acid sequence, 380 residues long: Tomoregulin-1 (380 aa).

A signal peptide spans 1–39 (MGAAAAEAPLRLPAAPPLAFCCYTSVLLLFAFSLPGSRA). At 40–330 (SNQPPGGGGG…VPSRQKLTHV (291 aa)) the chain is on the extracellular side. Kazal-like domains are found at residues 98-145 (ACQF…PCYS) and 189-237 (VCNI…HCTD). Intrachain disulfides connect Cys99/Cys129, Cys103/Cys122, Cys111/Cys143, Cys190/Cys221, Cys194/Cys214, Cys203/Cys235, Cys275/Cys288, Cys283/Cys299, and Cys301/Cys310. The EGF-like domain maps to 271 to 311 (NHMPCPENLNGYCIHGKCEFIYSTQKASCRCESGYTGQHCE). The chain crosses the membrane as a helical span at residues 331–351 (LIAAIIGAVQIAIIVAIVMCI). Residues 352-380 (TRKCPKNNRGRRQKQNLGHFTSDTSSRMV) lie on the Cytoplasmic side of the membrane. The interval 359-380 (NRGRRQKQNLGHFTSDTSSRMV) is disordered. A compositionally biased stretch (polar residues) spans 366 to 380 (QNLGHFTSDTSSRMV).

The protein belongs to the tomoregulin family. As to quaternary structure, may interact with ST14. In terms of tissue distribution, expressed predominantly in brain, and at lower levels in heart, placenta and skeletal muscle. Down-regulated in brain tumors as compared to control brain tissues.

It is found in the cell membrane. Functionally, neuron-specific restriction factor that prevents herpes simplex virus 1 (HHV-1) infection in the brain by blocking viral entry. Also able to restrict herpes simplex virus 2 (HHV-2) infection, although to a lesser extent. Acts by preventing the association between the viral glycoprotein D (gD) and its cell surface receptor NECTIN1, thereby inhibiting fusion of the virus and the cell membrane. Also able to prevent the association between the viral glycoprotein B (gB) and MYH9/NMMHC-IIA and MYH10/NMMHC-IIB receptors. May be a tumor suppressor in brain cancers. This is Tomoregulin-1 from Homo sapiens (Human).